The primary structure comprises 390 residues: Two-component response regulator ORR29 (390 aa).

Residues 13–130 (SAMVIDEDKC…TIKNLWQYVD (118 aa)) form the Response regulatory domain. Asp-65 is subject to 4-aspartylphosphate. Positions 169-226 (KKYYLMWTPHLQKKFLHALQILGKDASPKNIKKIMGVDNIDCRQIAAHLQKHRLRLTK) form a DNA-binding region, myb-like GARP. Disordered stretches follow at residues 233 to 271 (FTTD…QPTE) and 303 to 339 (SKHS…SGDH). The span at 257-271 (NASTLQPRSNTQPTE) shows a compositional bias: polar residues.

Belongs to the ARR family. Type-B subfamily. Post-translationally, two-component system major event consists of a His-to-Asp phosphorelay between a sensor histidine kinase (HK) and a response regulator (RR). In plants, the His-to-Asp phosphorelay involves an additional intermediate named Histidine-containing phosphotransfer protein (HPt). This multistep phosphorelay consists of a His-Asp-His-Asp sequential transfer of a phosphate group between first a His and an Asp of the HK protein, followed by the transfer to a conserved His of the HPt protein and finally the transfer to an Asp in the receiver domain of the RR protein.

The protein localises to the cytoplasm. The protein resides in the cytosol. It is found in the nucleus. Functionally, transcriptional activator that binds specific DNA sequence. Functions as a response regulator involved in His-to-Asp phosphorelay signal transduction system. Phosphorylation of the Asp residue in the receiver domain activates the ability of the protein to promote the transcription of target genes. May directly activate some type-A response regulators in response to cytokinins. Functions as a response regulator in response to cytokinins. This Oryza sativa subsp. japonica (Rice) protein is Two-component response regulator ORR29.